The chain runs to 644 residues: Protein DA1-related 6 (644 aa).

UIM domains are found at residues 119 to 138, 181 to 200, and 244 to 263; these read EEDE…NNRR, DVDE…KGKG, and DEDE…KGQI. The LIM zinc-binding domain maps to 284-355; that stretch reads SLCGGCNFAV…YVCKEKKMKT (72 aa). The span at 572–589 shows a compositional bias: low complexity; the sequence is ASSSASSSSRTPPAASAS. The disordered stretch occupies residues 572–591; sequence ASSSASSSSRTPPAASASKK.

As to quaternary structure, interacts with ubiquitin.

Functionally, ubiquitin receptor that probably regulates developmental process. The sequence is that of Protein DA1-related 6 (DAR6) from Arabidopsis thaliana (Mouse-ear cress).